The following is a 584-amino-acid chain: NADPH-dependent diflavin oxidoreductase 1 (584 aa).

Positions 6 to 150 (IYILYGSETG…VFAYWCNHLY (145 aa)) constitute a Flavodoxin-like domain. FMN contacts are provided by residues 12 to 17 (SETGTA), 59 to 62 (STTG), 97 to 106 (CGDTSYTRFN), and E132. The FAD-binding FR-type domain occupies 199-436 (RGKIEATLVH…LPGFLNLSYQ (238 aa)). FAD is bound by residues R343, 373-376 (RQYS), and 407-410 (GICS). Residues T448, 503–504 (SR), and 509–513 (KKYVQ) contribute to the NADP(+) site. W584 is a binding site for FAD.

It belongs to the NADPH-dependent diflavin oxidoreductase NDOR1 family. In the N-terminal section; belongs to the flavodoxin family. This sequence in the C-terminal section; belongs to the flavoprotein pyridine nucleotide cytochrome reductase family. Interacts with dre2; as part of the cytosolic iron-sulfur (Fe-S) protein assembly (CIA) machinery. Requires FAD as cofactor. The cofactor is FMN.

It localises to the cytoplasm. The protein resides in the mitochondrion. It catalyses the reaction 2 oxidized [2Fe-2S]-[protein] + NADPH = 2 reduced [2Fe-2S]-[protein] + NADP(+) + H(+). In terms of biological role, NADPH-dependent reductase which is a central component of the cytosolic iron-sulfur (Fe-S) protein assembly (CIA) machinery. Transfers electrons from NADPH via its FAD and FMN prosthetic groups to the [2Fe-2S] cluster of dre2, another key component of the CIA machinery. In turn, this reduced cluster provides electrons for assembly of cytosolic iron-sulfur cluster proteins. Positively controls H(2)O(2)-induced cell death. The chain is NADPH-dependent diflavin oxidoreductase 1 from Schizosaccharomyces pombe (strain 972 / ATCC 24843) (Fission yeast).